A 478-amino-acid polypeptide reads, in one-letter code: UDP-N-acetylmuramate--L-alanine ligase (478 aa).

122–128 (GTHGKTT) is a binding site for ATP.

Belongs to the MurCDEF family.

The protein resides in the cytoplasm. The catalysed reaction is UDP-N-acetyl-alpha-D-muramate + L-alanine + ATP = UDP-N-acetyl-alpha-D-muramoyl-L-alanine + ADP + phosphate + H(+). It participates in cell wall biogenesis; peptidoglycan biosynthesis. Cell wall formation. This is UDP-N-acetylmuramate--L-alanine ligase from Stenotrophomonas maltophilia (strain K279a).